We begin with the raw amino-acid sequence, 580 residues long: Glutamine--tRNA ligase (580 aa).

Residues 41–51 (PEPNGYLHIGH) carry the 'HIGH' region motif. Residues 42–44 (EPN) and 48–54 (HIGHAKA) contribute to the ATP site. Aspartate 74 and tyrosine 218 together coordinate L-glutamine. ATP-binding positions include threonine 237, 285–286 (RL), and 293–295 (MSK). Residues 292-296 (VMSKR) carry the 'KMSKS' region motif.

This sequence belongs to the class-I aminoacyl-tRNA synthetase family. Monomer.

Its subcellular location is the cytoplasm. It carries out the reaction tRNA(Gln) + L-glutamine + ATP = L-glutaminyl-tRNA(Gln) + AMP + diphosphate. The chain is Glutamine--tRNA ligase from Xylella fastidiosa (strain Temecula1 / ATCC 700964).